The sequence spans 269 residues: MEERERGKEKGSKGKGRKKRGKKGAGEAKEESKEEDRGEEEEESVEADVPVEEMAAGGARPKKKSPKEKSKGEEHCYKVHKRVLRWMKSAERIKYELDNGEEEKWRGRSIEEIEEQKVLHDITEVLKLLRSKECDKFFARTGKYMKGGSERWNMVGVGILEEGGKKRVGNVEVGLFEGKGGENIIYHLMFKPTDFEEEGEGARPSFGRCDGVDAIEEGRISDMSGFQYPPGVRSEITSSGSEFRIVWKNQRDTSLVLRSLTVLRIPEIR.

Over residues 1–12 the composition is skewed to basic and acidic residues; that stretch reads MEERERGKEKGS. Positions 1–74 are disordered; sequence MEERERGKEK…SPKEKSKGEE (74 aa). The span at 13 to 23 shows a compositional bias: basic residues; that stretch reads KGKGRKKRGKK. Positions 24-36 are enriched in basic and acidic residues; that stretch reads GAGEAKEESKEED. The segment covering 37–51 has biased composition (acidic residues); it reads RGEEEEESVEADVPV.

It belongs to the UPF0329 family.

The protein is UPF0329 protein ECU04_1660 of Encephalitozoon cuniculi (strain GB-M1) (Microsporidian parasite).